We begin with the raw amino-acid sequence, 359 residues long: Lachesin (359 aa).

An N-terminal signal peptide occupies residues 1–25 (MWRPSISNCVWSTLLLAIFVQQTLA). The Ig-like V-type domain occupies 29–130 (PTISYITQEQ…HKVSAEVKLS (102 aa)). C50 and C113 are oxidised to a cystine. N-linked (GlcNAc...) asparagine glycans are attached at residues N92 and N140. Ig-like C2-type domains lie at 135–221 (PVIS…INVE) and 226–317 (PVIT…ARVN). 2 cysteine pairs are disulfide-bonded: C157-C204 and C247-C303. A lipid anchor (GPI-anchor amidated alanine) is attached at A336. Residues 337 to 359 (GAEDVSATSFALVGILAALLFAR) constitute a propeptide, removed in mature form.

As to expression, expressed on differentiating neuronal cells from the onset of neurogenesis in both the central and peripheral nervous systems. First detected in the cellularized blastoderm, apart from in the ventral side. Expression persists uniformly in the early ectoderm until the end of gastrulation. From stage 10, expressed in an alternating strong/weak pattern in each segment until stage 15 when it disappears. From stage 11, expressed in subsets of neurons and later subsets of glial cells. From early stage 13, strongly expressed in trachea, hindgut, foregut and the nervous system.

It localises to the cell membrane. Functionally, required for normal tracheal development and maintenance of the trans-epithelial diffusion barrier. Functions as a homophilic cell-adhesion molecule. May play a role in early neuronal differentiation and axon outgrowth. The polypeptide is Lachesin (Lac) (Drosophila melanogaster (Fruit fly)).